The primary structure comprises 145 residues: Allergen MAG29 (145 aa).

Disordered stretches follow at residues 1-21 (KDDI…DDKQ) and 103-145 (AGGA…EEVD). A compositionally biased stretch (gly residues) spans 104–137 (GGAGAGGMPGGFPGGFPGTDGSGGGAAGGDGGKS).

This sequence belongs to the heat shock protein 70 family.

This chain is Allergen MAG29 (MAG29), found in Dermatophagoides farinae (American house dust mite).